The following is a 443-amino-acid chain: Ribosomal protein uS12 methylthiotransferase RimO (443 aa).

The MTTase N-terminal domain maps to 8-118; the sequence is PKVGFVSLGC…VVNAVHEVVP (111 aa). Residues Cys17, Cys53, Cys82, Cys151, Cys155, and Cys158 each contribute to the [4Fe-4S] cluster site. A Radical SAM core domain is found at 137–375; sequence LTPRHYAYLK…MAHQQAISAA (239 aa). One can recognise a TRAM domain in the interval 378 to 443; the sequence is QLRIGKEIDV…DEYDMWAEPI (66 aa).

It belongs to the methylthiotransferase family. RimO subfamily. Requires [4Fe-4S] cluster as cofactor.

The protein resides in the cytoplasm. The enzyme catalyses L-aspartate(89)-[ribosomal protein uS12]-hydrogen + (sulfur carrier)-SH + AH2 + 2 S-adenosyl-L-methionine = 3-methylsulfanyl-L-aspartate(89)-[ribosomal protein uS12]-hydrogen + (sulfur carrier)-H + 5'-deoxyadenosine + L-methionine + A + S-adenosyl-L-homocysteine + 2 H(+). Catalyzes the methylthiolation of an aspartic acid residue of ribosomal protein uS12. The protein is Ribosomal protein uS12 methylthiotransferase RimO of Pseudomonas putida (strain ATCC 700007 / DSM 6899 / JCM 31910 / BCRC 17059 / LMG 24140 / F1).